Here is a 127-residue protein sequence, read N- to C-terminus: Probable glycine cleavage system H protein (127 aa).

Residues 24–106 (TAEVGITAFA…FGDGWMLTVE (83 aa)) enclose the Lipoyl-binding domain. Position 65 is an N6-lipoyllysine (lysine 65).

Belongs to the GcvH family. As to quaternary structure, the glycine cleavage system is composed of four proteins: P, T, L and H. (R)-lipoate is required as a cofactor.

The glycine cleavage system catalyzes the degradation of glycine. The H protein shuttles the methylamine group of glycine from the P protein to the T protein. The sequence is that of Probable glycine cleavage system H protein from Haloarcula marismortui (strain ATCC 43049 / DSM 3752 / JCM 8966 / VKM B-1809) (Halobacterium marismortui).